Reading from the N-terminus, the 104-residue chain is NADH-quinone oxidoreductase subunit K (104 aa).

The next 3 helical transmembrane spans lie at 4 to 24 (VPLS…LYGA), 31 to 51 (VIVL…LVAF), and 64 to 84 (IFAL…LAIL).

It belongs to the complex I subunit 4L family. As to quaternary structure, NDH-1 is composed of 14 different subunits. Subunits NuoA, H, J, K, L, M, N constitute the membrane sector of the complex.

It is found in the cell membrane. The enzyme catalyses a quinone + NADH + 5 H(+)(in) = a quinol + NAD(+) + 4 H(+)(out). Functionally, NDH-1 shuttles electrons from NADH, via FMN and iron-sulfur (Fe-S) centers, to quinones in the respiratory chain. The immediate electron acceptor for the enzyme in this species is believed to be a menaquinone. Couples the redox reaction to proton translocation (for every two electrons transferred, four hydrogen ions are translocated across the cytoplasmic membrane), and thus conserves the redox energy in a proton gradient. The chain is NADH-quinone oxidoreductase subunit K from Geobacillus sp. (strain WCH70).